The sequence spans 332 residues: Methionine synthase (332 aa).

His-211, Cys-213, and Cys-296 together coordinate Zn(2+).

Belongs to the archaeal MetE family. It depends on Zn(2+) as a cofactor.

It functions in the pathway amino-acid biosynthesis; L-methionine biosynthesis via de novo pathway. In terms of biological role, catalyzes the transfer of a methyl group to L-homocysteine resulting in methionine formation. The physiological methyl donor is unknown. The protein is Methionine synthase of Saccharolobus islandicus (strain L.S.2.15 / Lassen #1) (Sulfolobus islandicus).